Consider the following 751-residue polypeptide: Putative tyrosine-protein kinase EpsB (751 aa).

At 1-31 (MTQNLSQPPAVNAPESELDLVRYLDVLVANR) the chain is on the cytoplasmic side. A helical membrane pass occupies residues 32–52 (WLIAGIAAVVMLLGATYAFLA). The Periplasmic portion of the chain corresponds to 53–444 (RPVYEADVLV…VPEEPVKPKK (392 aa)). Residues 445–465 (LTVTALAGVLGVVLGVVAAFV) form a helical membrane-spanning segment. Residues 466-751 (RNTLFGGITE…PSAEAEAESA (286 aa)) lie on the Cytoplasmic side of the membrane.

Belongs to the etk/wzc family.

The protein localises to the cell inner membrane. It carries out the reaction L-tyrosyl-[protein] + ATP = O-phospho-L-tyrosyl-[protein] + ADP + H(+). Its function is as follows. Probably involved in polymerization and/or export of exopolysaccharide EPS I which functions as a virulence factor. May be involved in an ATP-dependent process in the pathway for EPS I production, possibly export of the trimeric repeat units across the inner membrane or their polymerization. This chain is Putative tyrosine-protein kinase EpsB (epsB), found in Ralstonia nicotianae (strain ATCC BAA-1114 / GMI1000) (Ralstonia solanacearum).